Here is a 266-residue protein sequence, read N- to C-terminus: Tropinone reductase homolog At1g07440 (266 aa).

Residue 18-42 (LVTGGTKGIGHAIVEEFAGFGAVIH) coordinates NADP(+). Serine 151 serves as a coordination point for substrate. Tyrosine 164 functions as the Proton acceptor in the catalytic mechanism.

The protein belongs to the short-chain dehydrogenases/reductases (SDR) family. SDR65C subfamily.

The sequence is that of Tropinone reductase homolog At1g07440 from Arabidopsis thaliana (Mouse-ear cress).